The sequence spans 400 residues: tRNA pseudouridine synthase Pus10 (400 aa).

In terms of domain architecture, THUMP spans 77-194; it reads QVYVELFGSP…DGSVSVQPRR (118 aa). Tyr301 is a binding site for substrate.

It belongs to the pseudouridine synthase Pus10 family.

The enzyme catalyses uridine(54) in tRNA = pseudouridine(54) in tRNA. It carries out the reaction uridine(55) in tRNA = pseudouridine(55) in tRNA. Functionally, responsible for synthesis of pseudouridine from uracil-54 and uracil-55 in the psi GC loop of transfer RNAs. In Acidilobus saccharovorans (strain DSM 16705 / JCM 18335 / VKM B-2471 / 345-15), this protein is tRNA pseudouridine synthase Pus10.